Here is a 252-residue protein sequence, read N- to C-terminus: Pyridoxine 5'-phosphate synthase (252 aa).

3-amino-2-oxopropyl phosphate is bound by residues Asn8 and Arg19. His44 (proton acceptor) is an active-site residue. Residues Arg46 and His51 each contribute to the 1-deoxy-D-xylulose 5-phosphate site. Glu75 serves as the catalytic Proton acceptor. A 1-deoxy-D-xylulose 5-phosphate-binding site is contributed by Thr110. Residue His201 is the Proton donor of the active site. Residues Asp202 and 224–225 (GH) contribute to the 3-amino-2-oxopropyl phosphate site.

Belongs to the PNP synthase family. As to quaternary structure, homooctamer; tetramer of dimers.

The protein resides in the cytoplasm. The catalysed reaction is 3-amino-2-oxopropyl phosphate + 1-deoxy-D-xylulose 5-phosphate = pyridoxine 5'-phosphate + phosphate + 2 H2O + H(+). The protein operates within cofactor biosynthesis; pyridoxine 5'-phosphate biosynthesis; pyridoxine 5'-phosphate from D-erythrose 4-phosphate: step 5/5. Its function is as follows. Catalyzes the complicated ring closure reaction between the two acyclic compounds 1-deoxy-D-xylulose-5-phosphate (DXP) and 3-amino-2-oxopropyl phosphate (1-amino-acetone-3-phosphate or AAP) to form pyridoxine 5'-phosphate (PNP) and inorganic phosphate. This Albidiferax ferrireducens (strain ATCC BAA-621 / DSM 15236 / T118) (Rhodoferax ferrireducens) protein is Pyridoxine 5'-phosphate synthase.